The chain runs to 457 residues: MSGFTNKDGRQNLASCFNFRSSPFRLTVGERELKLEEDKNQLSKGLDPWTSNPTASASTLHYLLQEKERAQQAHEQLQIYQQQQGFGSFLQHRIRQPASRGPGGGGGGGDGGGSSGESTPVEALATAFGAGRIVRSAAGRKDRHSKVCTARGLRDRRVRLAAHTAIRFYDVQDRLGYDRPSKAVDWLMRNAKAAIDELPDRAEAPPPPAAASTEQPEATEQATSTSYGFGNTTGGTMTSAASAAAGSFLPHSLGADRVSDSVKSLFPSSSTASGAASAGHDEYRGSPPDLLSRTTSNQQPQELCLTLQSNQHQIFSHVSSNHHGMISSAGVPGWPDHSQRMQAWHAPENSTGDGRGGGNGDGYMFAMPSRQGLDQSQLFSHGEPLQSSGRGWASARAWLDPLAVAAIHHQPSTMAAGQVGFGHLVGGAGGGGGFMGFLAPAAQRLEGEEEHGSEVIR.

Residues 58–84 adopt a coiled-coil conformation; that stretch reads STLHYLLQEKERAQQAHEQLQIYQQQQ. Residues 95–119 form a disordered region; it reads RQPASRGPGGGGGGGDGGGSSGEST. The span at 101 to 115 shows a compositional bias: gly residues; that stretch reads GPGGGGGGGDGGGSS. A TCP domain is found at 140–198; it reads RKDRHSKVCTARGLRDRRVRLAAHTAIRFYDVQDRLGYDRPSKAVDWLMRNAKAAIDEL. Disordered regions lie at residues 199 to 231 and 263 to 299; these read PDRA…GFGN and KSLF…SNQQ. Composition is skewed to low complexity over residues 210-225 and 268-278; these read AAST…ATST and SSSTASGAASA.

In terms of assembly, forms homodimers and heterodimers.

The protein resides in the nucleus. Functionally, transcription activator. Binds the promoter core sequence 5'-GGNCC-3'. The polypeptide is Transcription factor PCF7 (PCF7) (Oryza sativa subsp. japonica (Rice)).